The following is a 406-amino-acid chain: Multifunctional CCA protein (406 aa).

ATP contacts are provided by Gly-8 and Arg-11. Residues Gly-8 and Arg-11 each coordinate CTP. Residues Asp-21 and Asp-23 each contribute to the Mg(2+) site. ATP is bound by residues Arg-91, Arg-138, and Arg-141. 3 residues coordinate CTP: Arg-91, Arg-138, and Arg-141. The region spanning 229–331 (TGIHQEMVSD…LELLGRCDAL (103 aa)) is the HD domain.

This sequence belongs to the tRNA nucleotidyltransferase/poly(A) polymerase family. Bacterial CCA-adding enzyme type 1 subfamily. Monomer. Can also form homodimers and oligomers. It depends on Mg(2+) as a cofactor. Ni(2+) is required as a cofactor.

It carries out the reaction a tRNA precursor + 2 CTP + ATP = a tRNA with a 3' CCA end + 3 diphosphate. The enzyme catalyses a tRNA with a 3' CCA end + 2 CTP + ATP = a tRNA with a 3' CCACCA end + 3 diphosphate. Functionally, catalyzes the addition and repair of the essential 3'-terminal CCA sequence in tRNAs without using a nucleic acid template. Adds these three nucleotides in the order of C, C, and A to the tRNA nucleotide-73, using CTP and ATP as substrates and producing inorganic pyrophosphate. tRNA 3'-terminal CCA addition is required both for tRNA processing and repair. Also involved in tRNA surveillance by mediating tandem CCA addition to generate a CCACCA at the 3' terminus of unstable tRNAs. While stable tRNAs receive only 3'-terminal CCA, unstable tRNAs are marked with CCACCA and rapidly degraded. The sequence is that of Multifunctional CCA protein from Stenotrophomonas maltophilia (strain K279a).